We begin with the raw amino-acid sequence, 546 residues long: Protein FAM124A (546 aa).

Disordered stretches follow at residues 1–37 (MDPK…SELS), 285–361 (KFPK…QRSK), and 488–546 (SSSS…EFYI). Positions 24–36 (SDYSHLSSTSSEL) are enriched in low complexity. Positions 285–302 (KFPKPGRVHHSSEKKRHS) are enriched in basic residues. 2 stretches are compositionally biased toward polar residues: residues 304–324 (PLPS…SPLN) and 347–361 (ANST…QRSK). Over residues 488–511 (SSSSATARAAPPAPSTSTLTDSSP) the composition is skewed to low complexity.

Belongs to the FAM124 family.

This chain is Protein FAM124A (FAM124A), found in Pongo abelii (Sumatran orangutan).